Reading from the N-terminus, the 231-residue chain is MKRLWSAFIKLLVLAVIGGALLAAIAILAANRQLPSLDALTAFRHTPDYVPIGKIPRELTGAVVAIEDERFYVHDGIDYIGVVRAGVANLSDELSQGASTITMQVARNFYLSRDKTYTRKLYEVLLSYRIEKALTKDEILELYMNKIYLGQGAYGFADAARTYFGKRLDQLTLAECAMLAGLPKAPSANNPVANPRRARQRQVYILQRMLELGRISRGEYDGALLEPLRLR.

A helical membrane pass occupies residues 8-28 (FIKLLVLAVIGGALLAAIAIL).

Belongs to the glycosyltransferase 51 family.

Its subcellular location is the secreted. It localises to the membrane. Its pathway is cell wall biogenesis; peptidoglycan biosynthesis. Functionally, cell wall formation. The sequence is that of Putative transglycosylase H16_A0665 from Cupriavidus necator (strain ATCC 17699 / DSM 428 / KCTC 22496 / NCIMB 10442 / H16 / Stanier 337) (Ralstonia eutropha).